A 344-amino-acid chain; its full sequence is Oxygen sensor histidine kinase NreB (344 aa).

Residues Cys-58, Cys-61, Cys-73, and Cys-76 each contribute to the [4Fe-4S] cluster site. Positions 152 to 344 constitute a Histidine kinase domain; that stretch reads RISRELHDSV…GTNVTLNIPI (193 aa). His-158 carries the post-translational modification Phosphohistidine; by autocatalysis.

Requires [4Fe-4S] cluster as cofactor. Post-translationally, autophosphorylated.

The protein resides in the cytoplasm. It catalyses the reaction ATP + protein L-histidine = ADP + protein N-phospho-L-histidine.. Its function is as follows. Member of the two-component regulatory system NreB/NreC involved in the control of dissimilatory nitrate/nitrite reduction in response to oxygen. NreB functions as a direct oxygen sensor histidine kinase which is autophosphorylated, in the absence of oxygen, probably at the conserved histidine residue, and transfers its phosphate group probably to a conserved aspartate residue of NreC. NreB/NreC activates the expression of the nitrate (narGHJI) and nitrite (nir) reductase operons, as well as the putative nitrate transporter gene narT. In Staphylococcus aureus (strain Mu3 / ATCC 700698), this protein is Oxygen sensor histidine kinase NreB (nreB).